We begin with the raw amino-acid sequence, 368 residues long: Protein RecA (368 aa).

72–79 (GNESSGKT) contacts ATP.

This sequence belongs to the RecA family.

The protein resides in the cytoplasm. Its function is as follows. Can catalyze the hydrolysis of ATP in the presence of single-stranded DNA, the ATP-dependent uptake of single-stranded DNA by duplex DNA, and the ATP-dependent hybridization of homologous single-stranded DNAs. It interacts with LexA causing its activation and leading to its autocatalytic cleavage. This chain is Protein RecA, found in Petrotoga mobilis (strain DSM 10674 / SJ95).